A 335-amino-acid chain; its full sequence is Phospho-N-acetylmuramoyl-pentapeptide-transferase (335 aa).

10 helical membrane passes run 3-23 (LTIL…PHFI), 53-73 (GGTV…LVYF), 78-98 (SLGL…IGFL), 118-138 (FTLQ…PSGI), 143-163 (VFGY…FWVV), 174-194 (GIDG…GVIA), 200-220 (FDVL…FLFN), 226-246 (IFMG…ISIA), 251-271 (WTLL…MLQV), and 314-334 (VDAF…AILY).

Belongs to the glycosyltransferase 4 family. MraY subfamily. Requires Mg(2+) as cofactor.

The protein resides in the cell membrane. The enzyme catalyses UDP-N-acetyl-alpha-D-muramoyl-L-alanyl-gamma-D-glutamyl-L-lysyl-D-alanyl-D-alanine + di-trans,octa-cis-undecaprenyl phosphate = Mur2Ac(oyl-L-Ala-gamma-D-Glu-L-Lys-D-Ala-D-Ala)-di-trans,octa-cis-undecaprenyl diphosphate + UMP. It participates in cell wall biogenesis; peptidoglycan biosynthesis. Its function is as follows. Catalyzes the initial step of the lipid cycle reactions in the biosynthesis of the cell wall peptidoglycan: transfers peptidoglycan precursor phospho-MurNAc-pentapeptide from UDP-MurNAc-pentapeptide onto the lipid carrier undecaprenyl phosphate, yielding undecaprenyl-pyrophosphoryl-MurNAc-pentapeptide, known as lipid I. This Streptococcus equi subsp. zooepidemicus (strain MGCS10565) protein is Phospho-N-acetylmuramoyl-pentapeptide-transferase.